Consider the following 325-residue polypeptide: Phosphatidylserine decarboxylase proenzyme (325 aa).

Residues Asp-90, His-147, and Ser-253 each act as charge relay system; for autoendoproteolytic cleavage activity in the active site. Ser-253 functions as the Schiff-base intermediate with substrate; via pyruvic acid; for decarboxylase activity in the catalytic mechanism. Pyruvic acid (Ser); by autocatalysis is present on Ser-253. The disordered stretch occupies residues 281 to 325; the sequence is MASKMSSQKAITPEQTTETPVQASNEFDDNAGETKKDTPSEGADS. Residues 284 to 305 show a composition bias toward polar residues; sequence KMSSQKAITPEQTTETPVQASN.

Belongs to the phosphatidylserine decarboxylase family. PSD-B subfamily. Prokaryotic type I sub-subfamily. In terms of assembly, heterodimer of a large membrane-associated beta subunit and a small pyruvoyl-containing alpha subunit. Requires pyruvate as cofactor. In terms of processing, is synthesized initially as an inactive proenzyme. Formation of the active enzyme involves a self-maturation process in which the active site pyruvoyl group is generated from an internal serine residue via an autocatalytic post-translational modification. Two non-identical subunits are generated from the proenzyme in this reaction, and the pyruvate is formed at the N-terminus of the alpha chain, which is derived from the carboxyl end of the proenzyme. The autoendoproteolytic cleavage occurs by a canonical serine protease mechanism, in which the side chain hydroxyl group of the serine supplies its oxygen atom to form the C-terminus of the beta chain, while the remainder of the serine residue undergoes an oxidative deamination to produce ammonia and the pyruvoyl prosthetic group on the alpha chain. During this reaction, the Ser that is part of the protease active site of the proenzyme becomes the pyruvoyl prosthetic group, which constitutes an essential element of the active site of the mature decarboxylase.

It is found in the cell membrane. The catalysed reaction is a 1,2-diacyl-sn-glycero-3-phospho-L-serine + H(+) = a 1,2-diacyl-sn-glycero-3-phosphoethanolamine + CO2. Its pathway is phospholipid metabolism; phosphatidylethanolamine biosynthesis; phosphatidylethanolamine from CDP-diacylglycerol: step 2/2. Functionally, catalyzes the formation of phosphatidylethanolamine (PtdEtn) from phosphatidylserine (PtdSer). This is Phosphatidylserine decarboxylase proenzyme from Alteromonas mediterranea (strain DSM 17117 / CIP 110805 / LMG 28347 / Deep ecotype).